Reading from the N-terminus, the 300-residue chain is Cation-efflux pump FieF (300 aa).

Residues 24 to 44 (LLIKIFAWWYTGSVSILAALV) traverse the membrane as a helical segment. Zn(2+) is bound by residues Asp-45 and Asp-49. Transmembrane regions (helical) follow at residues 82–102 (AALA…LTGI) and 114–134 (AGVG…LVTF). Residues His-153 and Asp-157 each contribute to the Zn(2+) site. 2 consecutive transmembrane segments (helical) span residues 156-176 (SDVM…YGWH) and 178-198 (ADAL…LRMG).

It belongs to the cation diffusion facilitator (CDF) transporter (TC 2.A.4) family. FieF subfamily. As to quaternary structure, homodimer.

The protein resides in the cell inner membrane. It catalyses the reaction Zn(2+)(in) + H(+)(out) = Zn(2+)(out) + H(+)(in). The enzyme catalyses Cd(2+)(in) + H(+)(out) = Cd(2+)(out) + H(+)(in). The catalysed reaction is Fe(2+)(in) + H(+)(out) = Fe(2+)(out) + H(+)(in). Functionally, divalent metal cation transporter which exports Zn(2+), Cd(2+) and possibly Fe(2+). May be involved in zinc and iron detoxification by efflux. The polypeptide is Cation-efflux pump FieF (Klebsiella pneumoniae subsp. pneumoniae (strain ATCC 700721 / MGH 78578)).